We begin with the raw amino-acid sequence, 335 residues long: NADP(+)-dependent glycerol-3-phosphate dehydrogenase (335 aa).

Position 137 (Gly137) interacts with sn-glycerol 3-phosphate. Ala141 contributes to the NADPH binding site. Sn-glycerol 3-phosphate is bound by residues Lys192, Asp250, Arg259, and Asn260. The active-site Proton acceptor is the Lys192. Arg259 contributes to the NADPH binding site. NADPH contacts are provided by Val287 and Glu289.

This sequence belongs to the NAD-dependent glycerol-3-phosphate dehydrogenase family. As to quaternary structure, homodimer.

It is found in the cytoplasm. It carries out the reaction sn-glycerol 3-phosphate + NADP(+) = dihydroxyacetone phosphate + NADPH + H(+). Its function is as follows. Catalyzes the reduction of the glycolytic intermediate dihydroxyacetone phosphate (DHAP) to sn-glycerol 3-phosphate (G3P). Shows a 15-fold preference for NADPH over NADH in the reduction process. Can also catalyze the reverse reaction in vitro. Shows no activity with dihydroxyacetone, glycerol, glycerol-2-phosphate, D-glyceraldehyde-3-phosphate, DL-glyceraldehyde, D-erythrose-4-phosphate, D-fructose-6-phosphate, beta-D-glucose-6-phosphate, or alpha-D-galactose-1-phosphate. This is NADP(+)-dependent glycerol-3-phosphate dehydrogenase from Archaeoglobus fulgidus (strain ATCC 49558 / DSM 4304 / JCM 9628 / NBRC 100126 / VC-16).